The following is a 125-amino-acid chain: Protein ApaG (125 aa).

Positions 1-125 (MINAPRVCVQ…FRLAIPSLIH (125 aa)) constitute an ApaG domain.

The chain is Protein ApaG from Pectobacterium carotovorum subsp. carotovorum (strain PC1).